Consider the following 179-residue polypeptide: ATP-dependent protease subunit HslV (179 aa).

Residue T6 is part of the active site. Residues S164, C167, and T170 each contribute to the Na(+) site.

It belongs to the peptidase T1B family. HslV subfamily. As to quaternary structure, a double ring-shaped homohexamer of HslV is capped on each side by a ring-shaped HslU homohexamer. The assembly of the HslU/HslV complex is dependent on binding of ATP.

It localises to the cytoplasm. The enzyme catalyses ATP-dependent cleavage of peptide bonds with broad specificity.. Its activity is regulated as follows. Allosterically activated by HslU binding. Protease subunit of a proteasome-like degradation complex believed to be a general protein degrading machinery. This chain is ATP-dependent protease subunit HslV, found in Listeria monocytogenes serotype 4b (strain CLIP80459).